Reading from the N-terminus, the 163-residue chain is Transcription elongation factor GreB (163 aa).

Residues 54-76 (GKRRMREIDRRIRFLTKRLEAAV) are a coiled coil.

This sequence belongs to the GreA/GreB family. GreB subfamily.

In terms of biological role, necessary for efficient RNA polymerase transcription elongation past template-encoded arresting sites. The arresting sites in DNA have the property of trapping a certain fraction of elongating RNA polymerases that pass through, resulting in locked ternary complexes. Cleavage of the nascent transcript by cleavage factors such as GreA or GreB allows the resumption of elongation from the new 3'terminus. GreB releases sequences of up to 9 nucleotides in length. This is Transcription elongation factor GreB from Neisseria meningitidis serogroup B (strain ATCC BAA-335 / MC58).